A 195-amino-acid polypeptide reads, in one-letter code: Exosome complex component CSL4 (195 aa).

Phosphoserine is present on residues Ser-21 and Ser-98. The S1 motif domain occupies 66-147 (DVGAIVTCKV…AQSNYLLTTA (82 aa)).

Belongs to the CSL4 family. As to quaternary structure, component of the RNA exosome core complex (Exo-9), composed of EXOSC1, EXOSC2, EXOSC3, EXOSC4, EXOSC5, EXOSC6, EXOSC7, EXOSC8 and EXOSC9; within the complex interacts with EXOSC6. The catalytically inactive RNA exosome core complex (Exo-9) associates with the catalytic subunit EXOSC10/RRP6. Exo-9 may associate with DIS3 to form the nucleolar exosome complex, or DIS3L to form the cytoplasmic exosome complex. Exo-9 is formed by a hexameric base ring consisting of the heterodimers EXOSC4-EXOSC9, EXOSC5-EXOSC8 and EXOSC6-EXOSC7, and a cap ring consisting of EXOSC1, EXOSC2 and EXOSC3. The RNA exosome complex associates with cofactors C1D/RRP47, MPHOSPH6/MPP6 and MTREX/MTR4. Interacts with DDX60.

Its subcellular location is the nucleus. It localises to the nucleolus. The protein resides in the cytoplasm. Its function is as follows. Non-catalytic component of the RNA exosome complex which has 3'-&gt;5' exoribonuclease activity and participates in a multitude of cellular RNA processing and degradation events. In the nucleus, the RNA exosome complex is involved in proper maturation of stable RNA species such as rRNA, snRNA and snoRNA, in the elimination of RNA processing by-products and non-coding 'pervasive' transcripts, such as antisense RNA species and promoter-upstream transcripts (PROMPTs), and of mRNAs with processing defects, thereby limiting or excluding their export to the cytoplasm. The RNA exosome may be involved in Ig class switch recombination (CSR) and/or Ig variable region somatic hypermutation (SHM) by targeting AICDA deamination activity to transcribed dsDNA substrates. In the cytoplasm, the RNA exosome complex is involved in general mRNA turnover and specifically degrades inherently unstable mRNAs containing AU-rich elements (AREs) within their 3' untranslated regions, and in RNA surveillance pathways, preventing translation of aberrant mRNAs. It seems to be involved in degradation of histone mRNA. The catalytic inactive RNA exosome core complex of 9 subunits (Exo-9) is proposed to play a pivotal role in the binding and presentation of RNA for ribonucleolysis, and to serve as a scaffold for the association with catalytic subunits and accessory proteins or complexes. EXOSC1 as peripheral part of the Exo-9 complex stabilizes the hexameric ring of RNase PH-domain subunits through contacts with EXOSC6 and EXOSC8. In Homo sapiens (Human), this protein is Exosome complex component CSL4 (EXOSC1).